Reading from the N-terminus, the 611-residue chain is Chaperone protein DnaK (611 aa).

A Phosphothreonine; by autocatalysis modification is found at Thr173. The span at 579–592 (AAGQAEGAQGAQDA) shows a compositional bias: low complexity. The segment at 579–598 (AAGQAEGAQGAQDAGAKKDN) is disordered.

It belongs to the heat shock protein 70 family.

Acts as a chaperone. This Bacillus cereus (strain ATCC 10987 / NRS 248) protein is Chaperone protein DnaK.